The following is a 148-amino-acid chain: WAP four-disulfide core domain protein 12 (148 aa).

Positions 1–23 (MRSYSFWFLTAFLVFATLALGEA) are cleaved as a signal peptide. Residues 27-74 (GKEKWGNCPAEKGSCIKSGPSQCHADNDCPGDKKCCFLSCSFKCVSPD) form the WAP domain. 4 cysteine pairs are disulfide-bonded: cysteine 34/cysteine 62, cysteine 41/cysteine 66, cysteine 49/cysteine 61, and cysteine 55/cysteine 70. The tract at residues 74-148 (DRIRKEGGNE…QEASPQKEWS (75 aa)) is disordered.

The protein resides in the secreted. Functionally, antibacterial protein. Putative acid-stable proteinase inhibitor. The polypeptide is WAP four-disulfide core domain protein 12 (WFDC12) (Lemur catta (Ring-tailed lemur)).